We begin with the raw amino-acid sequence, 528 residues long: Purine-cytosine permease FCY21 (528 aa).

Topologically, residues 1 to 90 (MPQTHEMSLN…DDSILNAASM (90 aa)) are cytoplasmic. Ser-43 bears the Phosphoserine mark. Thr-46 is modified (phosphothreonine). Residues 91–111 (WFSANMVLPAYAIGALGPMVF) traverse the membrane as a helical segment. The Extracellular segment spans residues 112–118 (DLNFGQS). Residues 119–139 (VFVIIFFNLLGLVSVAFFSVF) traverse the membrane as a helical segment. The Cytoplasmic portion of the chain corresponds to 140-161 (GAELGLRQMILSRYLVGNIAAR). The helical transmembrane segment at 162-182 (IFSFINFIACIGWGIVNTVAS) threads the bilayer. Residues 183–198 (SQVLNMVNPGHQCPLW) lie on the Extracellular side of the membrane. A helical membrane pass occupies residues 199–219 (AGCIVIIGATVIVTFFGYGVI). The Cytoplasmic segment spans residues 220–221 (HA). Residues 222–242 (YEKWAWVPNFAVFLVIIARLA) form a helical membrane-spanning segment. Residues 243–260 (RSKKFVLGEWTSGPTTAG) are Extracellular-facing. The chain crosses the membrane as a helical span at residues 261-281 (NVLSFGSTVYGFAAGWTTYAA). Over 282-295 (DYTVYMPRKTNKYK) the chain is Cytoplasmic. Residues 296-316 (IFFSLVVGLATPLYFTMILGA) form a helical membrane-spanning segment. At 317-340 (AVAMAAIGDPAWKTYYDENSIGGL) the chain is on the extracellular side. The chain crosses the membrane as a helical span at residues 341–361 (TFAVLVPNSVHGFGQFCCVLL). At 362–393 (SLSTIANNVPNMYTIALSVQATWEPLAKVPRV) the chain is on the cytoplasmic side. The helical transmembrane segment at 394 to 414 (IWTLLGNAAALGIAIPACYYF) threads the bilayer. Topologically, residues 415-416 (ST) are extracellular. The helical transmembrane segment at 417–437 (FMNYFMDSIGYYLAIYIAIAC) threads the bilayer. Residues 438–460 (SEHFIYRRSFSAYNVDDWDSWER) are Cytoplasmic-facing. The helical transmembrane segment at 461–481 (LPIGIAGTAALIVGAFGVALG) threads the bilayer. Over 482 to 493 (MCQTYWVGEISR) the chain is Extracellular. The helical transmembrane segment at 494 to 514 (LIGDYGGDIGFELGLSWAFIV) threads the bilayer. Topologically, residues 515-528 (YNIARPFELKYFGR) are cytoplasmic.

The protein belongs to the purine-cytosine permease (2.A.39) family.

The protein resides in the membrane. Its function is as follows. Probable purine-cytosine permease. This Saccharomyces cerevisiae (strain ATCC 204508 / S288c) (Baker's yeast) protein is Purine-cytosine permease FCY21 (FCY21).